Consider the following 668-residue polypeptide: tRNA 5-methylaminomethyl-2-thiouridine biosynthesis bifunctional protein MnmC (668 aa).

The tract at residues 1–245 (MKHYSIQPAN…KREMLCGVME (245 aa)) is tRNA (mnm(5)s(2)U34)-methyltransferase. The FAD-dependent cmnm(5)s(2)U34 oxidoreductase stretch occupies residues 270–668 (IGGGIASALL…LLKGKAVKAG (399 aa)).

In the N-terminal section; belongs to the methyltransferase superfamily. tRNA (mnm(5)s(2)U34)-methyltransferase family. The protein in the C-terminal section; belongs to the DAO family. FAD serves as cofactor.

Its subcellular location is the cytoplasm. The enzyme catalyses 5-aminomethyl-2-thiouridine(34) in tRNA + S-adenosyl-L-methionine = 5-methylaminomethyl-2-thiouridine(34) in tRNA + S-adenosyl-L-homocysteine + H(+). Functionally, catalyzes the last two steps in the biosynthesis of 5-methylaminomethyl-2-thiouridine (mnm(5)s(2)U) at the wobble position (U34) in tRNA. Catalyzes the FAD-dependent demodification of cmnm(5)s(2)U34 to nm(5)s(2)U34, followed by the transfer of a methyl group from S-adenosyl-L-methionine to nm(5)s(2)U34, to form mnm(5)s(2)U34. This is tRNA 5-methylaminomethyl-2-thiouridine biosynthesis bifunctional protein MnmC from Escherichia coli (strain K12 / DH10B).